Consider the following 414-residue polypeptide: Imidazolonepropionase (414 aa).

Fe(3+)-binding residues include His-95 and His-97. Zn(2+) is bound by residues His-95 and His-97. The 4-imidazolone-5-propanoate site is built by Arg-104, Tyr-162, and His-189. Tyr-162 lines the N-formimidoyl-L-glutamate pocket. Residue His-252 participates in Fe(3+) binding. A Zn(2+)-binding site is contributed by His-252. Gln-255 contacts 4-imidazolone-5-propanoate. Asp-326 is a binding site for Fe(3+). Asp-326 contacts Zn(2+). The N-formimidoyl-L-glutamate site is built by Asn-328 and Gly-330. 4-imidazolone-5-propanoate is bound at residue Ser-331.

The protein belongs to the metallo-dependent hydrolases superfamily. HutI family. Requires Zn(2+) as cofactor. It depends on Fe(3+) as a cofactor.

Its subcellular location is the cytoplasm. The catalysed reaction is 4-imidazolone-5-propanoate + H2O = N-formimidoyl-L-glutamate. The protein operates within amino-acid degradation; L-histidine degradation into L-glutamate; N-formimidoyl-L-glutamate from L-histidine: step 3/3. In terms of biological role, catalyzes the hydrolytic cleavage of the carbon-nitrogen bond in imidazolone-5-propanoate to yield N-formimidoyl-L-glutamate. It is the third step in the universal histidine degradation pathway. This Streptomyces avermitilis (strain ATCC 31267 / DSM 46492 / JCM 5070 / NBRC 14893 / NCIMB 12804 / NRRL 8165 / MA-4680) protein is Imidazolonepropionase.